The primary structure comprises 437 residues: Chromosomal replication initiator protein DnaA (437 aa).

The tract at residues 1-67 (MKNKIIASLK…KVVKDILGKD (67 aa)) is domain I, interacts with DnaA modulators. Residues 67-97 (DATYEITFKEIPYETKVESGPLIKKRPLLIT) form a domain II region. The segment at 98 to 313 (PLNPKYTFEN…GAILRLIAYR (216 aa)) is domain III, AAA+ region. 4 residues coordinate ATP: G141, G143, K144, and T145. The tract at residues 314–437 (NLYGTLNLSI…SKGFAQGESM (124 aa)) is domain IV, binds dsDNA.

The protein belongs to the DnaA family. In terms of assembly, oligomerizes as a right-handed, spiral filament on DNA at oriC.

The protein localises to the cytoplasm. Its function is as follows. Plays an essential role in the initiation and regulation of chromosomal replication. ATP-DnaA binds to the origin of replication (oriC) to initiate formation of the DNA replication initiation complex once per cell cycle. Binds the DnaA box (a 9 base pair repeat at the origin) and separates the double-stranded (ds)DNA. Forms a right-handed helical filament on oriC DNA; dsDNA binds to the exterior of the filament while single-stranded (ss)DNA is stabiized in the filament's interior. The ATP-DnaA-oriC complex binds and stabilizes one strand of the AT-rich DNA unwinding element (DUE), permitting loading of DNA polymerase. After initiation quickly degrades to an ADP-DnaA complex that is not apt for DNA replication. Binds acidic phospholipids. This is Chromosomal replication initiator protein DnaA from Thermosipho melanesiensis (strain DSM 12029 / CIP 104789 / BI429).